Here is a 346-residue protein sequence, read N- to C-terminus: Lipooligosaccharide heptosyltransferase 2 (346 aa).

It belongs to the glycosyltransferase 9 family.

The enzyme catalyses an L-alpha-D-Hep-(1-&gt;5)-[alpha-Kdo-(2-&gt;4)]-alpha-Kdo-(2-&gt;6)-lipid A + ADP-L-glycero-beta-D-manno-heptose = an L-alpha-D-Hep-(1-&gt;3)-L-alpha-D-Hep-(1-&gt;5)-[alpha-Kdo-(2-&gt;4)]-alpha-Kdo-(2-&gt;6)-lipid A + ADP + H(+). The protein operates within bacterial outer membrane biogenesis; LOS core biosynthesis. Glycosyltransferase involved in the biosynthesis of the core oligosaccharide region of lipooligosaccharide (LOS). Catalyzes the addition of a heptose unit to the heptosyl-Kdo2-lipid A module. This Haemophilus influenzae (strain ATCC 51907 / DSM 11121 / KW20 / Rd) protein is Lipooligosaccharide heptosyltransferase 2 (waaF).